The primary structure comprises 426 residues: uncharacterized protein (426 aa).

The protein belongs to the serpin family.

This is an uncharacterized protein from Methanosarcina acetivorans (strain ATCC 35395 / DSM 2834 / JCM 12185 / C2A).